A 254-amino-acid polypeptide reads, in one-letter code: Type III pantothenate kinase 2 (254 aa).

ATP is bound at residue 6–13; it reads DMGNSHIH. Position 107 to 110 (107 to 110) interacts with substrate; sequence GADR. The active-site Proton acceptor is Asp109. K(+) is bound at residue Asp130. Thr133 lines the ATP pocket. Thr185 is a binding site for substrate.

It belongs to the type III pantothenate kinase family. As to quaternary structure, homodimer. It depends on NH4(+) as a cofactor. K(+) serves as cofactor.

It localises to the cytoplasm. It carries out the reaction (R)-pantothenate + ATP = (R)-4'-phosphopantothenate + ADP + H(+). It participates in cofactor biosynthesis; coenzyme A biosynthesis; CoA from (R)-pantothenate: step 1/5. Its function is as follows. Catalyzes the phosphorylation of pantothenate (Pan), the first step in CoA biosynthesis. The protein is Type III pantothenate kinase 2 of Francisella tularensis subsp. holarctica (strain LVS).